We begin with the raw amino-acid sequence, 71 residues long: Large ribosomal subunit protein bL31 (71 aa).

Residues cysteine 16, cysteine 18, cysteine 37, and cysteine 40 each coordinate Zn(2+).

Belongs to the bacterial ribosomal protein bL31 family. Type A subfamily. In terms of assembly, part of the 50S ribosomal subunit. Zn(2+) is required as a cofactor.

Functionally, binds the 23S rRNA. This Pseudoalteromonas atlantica (strain T6c / ATCC BAA-1087) protein is Large ribosomal subunit protein bL31.